Here is a 224-residue protein sequence, read N- to C-terminus: Octanoyltransferase (224 aa).

The 196-residue stretch at 29–224 (PGTPDELWLC…GDRLESYLSP (196 aa)) folds into the BPL/LPL catalytic domain. Substrate-binding positions include 68–75 (RGGQVTYH), 157–159 (ALG), and 170–172 (GLA). Cys-188 acts as the Acyl-thioester intermediate in catalysis.

Belongs to the LipB family.

The protein resides in the cytoplasm. The catalysed reaction is octanoyl-[ACP] + L-lysyl-[protein] = N(6)-octanoyl-L-lysyl-[protein] + holo-[ACP] + H(+). It participates in protein modification; protein lipoylation via endogenous pathway; protein N(6)-(lipoyl)lysine from octanoyl-[acyl-carrier-protein]: step 1/2. Functionally, catalyzes the transfer of endogenously produced octanoic acid from octanoyl-acyl-carrier-protein onto the lipoyl domains of lipoate-dependent enzymes. Lipoyl-ACP can also act as a substrate although octanoyl-ACP is likely to be the physiological substrate. In Methylibium petroleiphilum (strain ATCC BAA-1232 / LMG 22953 / PM1), this protein is Octanoyltransferase.